Here is a 63-residue protein sequence, read N- to C-terminus: Large ribosomal subunit protein uL29 (63 aa).

This sequence belongs to the universal ribosomal protein uL29 family.

In Yersinia pseudotuberculosis serotype O:1b (strain IP 31758), this protein is Large ribosomal subunit protein uL29.